A 219-amino-acid chain; its full sequence is 2,3-bisphosphoglycerate-dependent phosphoglycerate mutase 2 (219 aa).

Residues 8–15 (RHGQSIWN), 21–22 (TG), R58, 85–88 (ERHY), K96, 112–113 (RR), and 156–157 (GN) each bind substrate. H9 acts as the Tele-phosphohistidine intermediate in catalysis. E85 acts as the Proton donor/acceptor in catalysis.

It belongs to the phosphoglycerate mutase family. BPG-dependent PGAM subfamily.

It catalyses the reaction (2R)-2-phosphoglycerate = (2R)-3-phosphoglycerate. It functions in the pathway carbohydrate degradation; glycolysis; pyruvate from D-glyceraldehyde 3-phosphate: step 3/5. Catalyzes the interconversion of 2-phosphoglycerate and 3-phosphoglycerate. This is 2,3-bisphosphoglycerate-dependent phosphoglycerate mutase 2 from Gloeobacter violaceus (strain ATCC 29082 / PCC 7421).